A 457-amino-acid polypeptide reads, in one-letter code: uncharacterized protein (457 aa).

Helical transmembrane passes span 15–35, 54–74, 87–107, 112–132, 144–164, 166–186, 205–225, 229–249, 269–289, 308–328, 334–354, 357–377, 400–420, and 428–448; these read YGAI…GAIA, IWVV…FSFL, GLVV…LQML, VIQG…IRLI, INSF…AAIL, IASW…ALLL, LPSA…LSGF, QSLT…IFFI, LFSL…LAMV, LLLT…GYLI, GLLG…LVLL, SPAD…FGLF, MLGT…ALML, and THVS…VSGL.

It belongs to the major facilitator superfamily. TCR/Tet family.

It is found in the cell inner membrane. This is an uncharacterized protein from Escherichia coli (strain K12).